Here is a 241-residue protein sequence, read N- to C-terminus: Ribonuclease PH (241 aa).

Residues Arg89 and 127-129 each bind phosphate; that span reads GTR.

Belongs to the RNase PH family. Homohexameric ring arranged as a trimer of dimers.

It carries out the reaction tRNA(n+1) + phosphate = tRNA(n) + a ribonucleoside 5'-diphosphate. Functionally, phosphorolytic 3'-5' exoribonuclease that plays an important role in tRNA 3'-end maturation. Removes nucleotide residues following the 3'-CCA terminus of tRNAs; can also add nucleotides to the ends of RNA molecules by using nucleoside diphosphates as substrates, but this may not be physiologically important. Probably plays a role in initiation of 16S rRNA degradation (leading to ribosome degradation) during starvation. The sequence is that of Ribonuclease PH from Xanthomonas campestris pv. campestris (strain 8004).